A 370-amino-acid polypeptide reads, in one-letter code: Adaptive-response sensory kinase SasA (370 aa).

A Histidine kinase domain is found at 152–365; it reads MVAHELRTPL…CFYLTVPVWQ (214 aa). Histidine 155 is subject to Phosphohistidine; by autocatalysis.

In terms of assembly, homooligomerizes. Interacts with KaiC. Participates in the KaiBC complex, whose core is composed of a KaiC homohexamer and 6 KaiB.

The catalysed reaction is ATP + protein L-histidine = ADP + protein N-phospho-L-histidine.. Its function is as follows. Member of the two-component regulatory system SasA/RpaA involved in genome-wide circadian gene expression. One of several clock output pathways. Participates in the Kai clock protein complex, the main circadian regulator in cyanobacteria, via its interaction with KaiC. KaiC enhances the autophosphorylation activity of SasA, which then transfers its phosphate group to RpaA to activate it. In addition to its output function, recruits fold-shifted KaiB (KaiB(fs)) to KaiC to cooperatively form the KaiB(6):KaiC(6) complex (independent of SasA kinase activity). Required for robustness of the circadian rhythm of gene expression and is involved in clock output, also required for adaptation to light/dark cycles. In Prochlorococcus marinus (strain MIT 9313), this protein is Adaptive-response sensory kinase SasA.